The following is a 349-amino-acid chain: tRNA pseudouridine synthase D (349 aa).

Phe-27 contacts substrate. The active-site Nucleophile is the Asp-80. Asn-129 is a substrate binding site. The region spanning 155 to 303 (GVPNYFGAQR…VEAARRAMLL (149 aa)) is the TRUD domain. A substrate-binding site is contributed by Phe-329.

Belongs to the pseudouridine synthase TruD family.

It carries out the reaction uridine(13) in tRNA = pseudouridine(13) in tRNA. In terms of biological role, responsible for synthesis of pseudouridine from uracil-13 in transfer RNAs. The sequence is that of tRNA pseudouridine synthase D from Shigella dysenteriae serotype 1 (strain Sd197).